The primary structure comprises 405 residues: MQEKEASPHGFLPRFQHFATQAIHVGQEPEQWTSQAVVPPISLSTTFKQGAPGQHSGFEYSRSGNPTRNCLEKAVAALDGAKYSLAFASGLAATVTITHLLKAGDQIICMDDVYGGTNRYFRQVATEFGLKISFVDCSKPKLLEAAITPETKLVWIETPTNPSLKMIDIEACAHTVHKHGDIILVVDNTFMSAYFQRPLSLGADICMYSATKYMNGYSDVVMGLVSLNSESLHDRLRFLQNSLGAVPSPIDCYLCNRGLKTLQVRMEKHFENGMAVAQFLESNPQVEKVIYPGLPSHPQHELAKRQCTGCPGMVTFYIKGSLQHAETFLQNLKLFTLAESLGGYESLAELPAIMTHASVPKSDREVLGISDTLIRLSVGLEDKQDLLDDLDQALKAANPPNASSN.

Residues R62, Y114, and R119 each contribute to the substrate site. The residue at position 212 (K212) is an N6-(pyridoxal phosphate)lysine. Position 339 (E339) interacts with substrate.

Belongs to the trans-sulfuration enzymes family. Homotetramer. Interacts with CALM in a calcium-dependent manner. Requires pyridoxal 5'-phosphate as cofactor.

Its subcellular location is the cytoplasm. The catalysed reaction is L,L-cystathionine + H2O = 2-oxobutanoate + L-cysteine + NH4(+). Its pathway is amino-acid biosynthesis; L-cysteine biosynthesis; L-cysteine from L-homocysteine and L-serine: step 2/2. Functionally, catalyzes the last step in the trans-sulfuration pathway from methionine to cysteine. Has broad substrate specificity. Converts cystathionine to cysteine, ammonia and 2-oxobutanoate. Converts two cysteine molecules to lanthionine and hydrogen sulfide. Can also accept homocysteine as substrate. Specificity depends on the levels of the endogenous substrates. Generates the endogenous signaling molecule hydrogen sulfide (H2S), and so contributes to the regulation of blood pressure. Acts as a cysteine-protein sulfhydrase by mediating sulfhydration of target proteins: sulfhydration consists of converting -SH groups into -SSH on specific cysteine residues of target proteins such as GAPDH, PTPN1 and NF-kappa-B subunit RELA, thereby regulating their function. The chain is Cystathionine gamma-lyase (CTH) from Bos taurus (Bovine).